The chain runs to 459 residues: Probable ECA polymerase (459 aa).

Helical transmembrane passes span leucine 3–leucine 23, isoleucine 37–leucine 57, valine 65–tyrosine 85, leucine 119–phenylalanine 139, glycine 154–leucine 174, tryptophan 181–glycine 201, isoleucine 206–tryptophan 226, methionine 227–tyrosine 247, leucine 340–isoleucine 360, tyrosine 377–alanine 397, and valine 409–phenylalanine 429.

Belongs to the WzyE family. Probably part of a complex composed of WzxE, WzyE and WzzE.

Its subcellular location is the cell inner membrane. It functions in the pathway bacterial outer membrane biogenesis; enterobacterial common antigen biosynthesis. Functionally, probably involved in the polymerization of enterobacterial common antigen (ECA) trisaccharide repeat units. The protein is Probable ECA polymerase of Photorhabdus laumondii subsp. laumondii (strain DSM 15139 / CIP 105565 / TT01) (Photorhabdus luminescens subsp. laumondii).